A 203-amino-acid chain; its full sequence is RNA pyrophosphohydrolase (203 aa).

In terms of domain architecture, Nudix hydrolase spans 6–149 (GFRPNVGIIL…KRNVYQMALT (144 aa)). Residues 38-59 (GGIKHGESPEQAMFRELHEEVG) carry the Nudix box motif. Positions 170–203 (RAHRRDEGSEHNDHLDPTGPHDAGASVSEPKQAE) are disordered. Basic and acidic residues predominate over residues 173–185 (RRDEGSEHNDHLD).

Belongs to the Nudix hydrolase family. RppH subfamily. Requires a divalent metal cation as cofactor.

Accelerates the degradation of transcripts by removing pyrophosphate from the 5'-end of triphosphorylated RNA, leading to a more labile monophosphorylated state that can stimulate subsequent ribonuclease cleavage. In Leptothrix cholodnii (strain ATCC 51168 / LMG 8142 / SP-6) (Leptothrix discophora (strain SP-6)), this protein is RNA pyrophosphohydrolase.